The chain runs to 169 residues: Myosin regulatory light chain 2, skeletal muscle isoform A (169 aa).

S21 bears the Phosphoserine mark. EF-hand domains lie at 26–61, 96–131, and 132–167; these read SQIQEYKEAFTIIDQNRDGIISKDDLRDVLASMGQL, DPEDVIVSAFKVLDPEGTGSIKKEFLEELLTTQCDR, and FTAEEMKNLWAAFPPDVAGNVDYKNICYVITHGEEK. 4 residues coordinate Ca(2+): D39, N41, D43, and D50.

In terms of assembly, myosin is a hexamer of 2 heavy chains and 4 light chains. Interacts with nanos3; the interaction negatively regulates mylpfa phosphorylation.

Myosin regulatory subunit that plays a role to maintain muscle integrity during early development. Plays a role in muscle contraction. This Danio rerio (Zebrafish) protein is Myosin regulatory light chain 2, skeletal muscle isoform A (mylpfa).